A 385-amino-acid polypeptide reads, in one-letter code: Type III polyketide synthase C (385 aa).

56–63 (KLQHLCKS) provides a ligand contact to CoA. Cys165 functions as the Nucleophile in the catalytic mechanism. 217-218 (GD) serves as a coordination point for substrate. Residues Leu267, 307 to 310 (GGPA), and Ala310 each bind CoA.

Belongs to the thiolase-like superfamily. Chalcone/stilbene synthases family. As to quaternary structure, homodimer.

The protein resides in the endoplasmic reticulum. It participates in secondary metabolite biosynthesis; flavonoid biosynthesis. In terms of biological role, plant type III polyketide synthases (PKSs) that catalyzes the condensation of malonyl-CoA units with various CoA ester starter molecules to generate a diverse array of natural products including long-chain alkyl alpha-pyrones. In Arabidopsis thaliana (Mouse-ear cress), this protein is Type III polyketide synthase C.